A 164-amino-acid polypeptide reads, in one-letter code: Protein SprT (164 aa).

In terms of domain architecture, SprT-like spans 12-157 (CFLQAESFFK…CRRCRQTLVF (146 aa)). Histidine 69 contributes to the Zn(2+) binding site. The active site involves glutamate 70. Histidine 73 provides a ligand contact to Zn(2+).

This sequence belongs to the SprT family. The cofactor is Zn(2+).

Its subcellular location is the cytoplasm. The chain is Protein SprT from Pseudomonas fluorescens (strain SBW25).